The chain runs to 314 residues: Ficolin-2 (314 aa).

The signal sequence occupies residues methionine 1–alanine 17. One can recognise a Collagen-like domain in the interval glycine 40–serine 96. The tract at residues glycine 49 to threonine 101 is disordered. The region spanning glutamine 97–isoleucine 314 is the Fibrinogen C-terminal domain. Intrachain disulfides connect cysteine 99-cysteine 127 and cysteine 106-cysteine 134. Residues aspartate 250, aspartate 252, serine 254, and serine 256 each coordinate Ca(2+). A disulfide bond links cysteine 258 and cysteine 271. Asparagine 301 carries an N-linked (GlcNAc...) asparagine glycan.

It belongs to the ficolin lectin family. In terms of assembly, homotrimer. Interacts with elastin. Interacts with MASP1 and MASP2.

It localises to the secreted. Functionally, may function in innate immunity through activation of the lectin complement pathway. Calcium-dependent and GlcNAc-binding lectin. The polypeptide is Ficolin-2 (Fcn2) (Mus musculus (Mouse)).